The following is a 180-amino-acid chain: Sperm protein associated with the nucleus on the X chromosome N2 (180 aa).

Disordered stretches follow at residues 1–46 (MEQP…KTKT) and 64–180 (NSNQ…GGED). Residues 10-26 (GEKRKSPCESNNKKNDE) are compositionally biased toward basic and acidic residues. The segment covering 82 to 169 (QEEEDEGLDS…SSQEDEDLDS (88 aa)) has biased composition (acidic residues). Low complexity predominate over residues 170 to 180 (SEGSSQEGGED).

Belongs to the SPAN-X family.

This is Sperm protein associated with the nucleus on the X chromosome N2 (SPANXN2) from Homo sapiens (Human).